We begin with the raw amino-acid sequence, 440 residues long: Cell division protein DivIB (440 aa).

Over residues 1–10 the composition is skewed to basic and acidic residues; that stretch reads MMDDKTKNDQ. 2 disordered regions span residues 1-97 and 123-154; these read MMDD…DSNI and QHQS…TQLK. Topologically, residues 1–174 are cytoplasmic; it reads MMDDKTKNDQ…RRKRQKRIQY (174 aa). Acidic residues predominate over residues 12-21; sequence ESNEDKDELE. Residues 27 to 39 are compositionally biased toward basic residues; that stretch reads TSKKRRQRKRSKA. Low complexity predominate over residues 78–87; the sequence is DSASSHANDN. Over residues 88-97 the composition is skewed to acidic residues; sequence NIDDSTDSNI. The segment covering 124-134 has biased composition (polar residues); sequence HQSAPNEQNSD. The chain crosses the membrane as a helical span at residues 175–195; sequence SVITILVLLIAVILIYMFSPL. A POTRA domain is found at 196–264; sequence SKIAHVNING…NTLNVDITEN (69 aa). The Extracellular portion of the chain corresponds to 196–440; sequence SKIAHVNING…KINKQSSKNN (245 aa). A disordered region spans residues 397–440; sequence YRGNTSTQSESDKNVTKSSQEENQAKEELQSVLNKINKQSSKNN. Residues 406 to 425 show a composition bias toward basic and acidic residues; that stretch reads ESDKNVTKSSQEENQAKEEL. The span at 427-440 shows a compositional bias: polar residues; the sequence is SVLNKINKQSSKNN.

This sequence belongs to the FtsQ/DivIB family. DivIB subfamily.

It is found in the cell membrane. Its function is as follows. Cell division protein that may be involved in stabilizing or promoting the assembly of the division complex. This Staphylococcus aureus (strain MRSA252) protein is Cell division protein DivIB.